The primary structure comprises 739 residues: Poly(A) polymerase alpha (739 aa).

Low complexity predominate over residues 1-17; that stretch reads MPFPVTTQGSQQTQPPQ. A disordered region spans residues 1 to 23; the sequence is MPFPVTTQGSQQTQPPQKHYGIT. Ser10 and Ser24 each carry phosphoserine. ATP contacts are provided by residues 100–102, Thr109, 113–115, Asp167, Lys228, Tyr237, and 246–247; these read FGS, DID, and GV. Mg(2+)-binding residues include Asp113, Asp115, and Asp167. Residues Lys444, Lys445, Lys506, and Lys507 each participate in a glycyl lysine isopeptide (Lys-Gly) (interchain with G-Cter in SUMO) cross-link. Positions 490–507 match the Nuclear localization signal 1 motif; that stretch reads RKQLHQLLPSHVLQKKKK. 2 disordered regions span residues 501–565 and 580–700; these read VLQK…AVTA and QINS…TIQT. The tract at residues 508 to 643 is ser/Thr-rich; the sequence is HSTEGVKLTP…AKIPNPIVGV (136 aa). Residues 518 to 534 show a composition bias toward low complexity; it reads LNDSSLDLSMDSDNSMS. Positions 535-557 are enriched in polar residues; sequence VPSPTSAMKTSPLNSSGSSQGRN. At Ser537 the chain carries Phosphoserine; by MAPK. The residue at position 558 (Ser558) is a Phosphoserine. The span at 583-594 shows a compositional bias: low complexity; it reads SSESSGGTSSES. A compositionally biased stretch (polar residues) spans 595–604; that stretch reads IPQTATQPAI. A compositionally biased stretch (low complexity) spans 611–620; that stretch reads TVSRVVSSTR. N6-acetyllysine is present on residues Lys635 and Lys644. The Nuclear localization signal 2 signature appears at 644–659; the sequence is KRTSSPHKEESPKKTK. Basic and acidic residues-rich tracts occupy residues 649-660 and 676-686; these read PHKEESPKKTKT and GHDKTETKEQL. Positions 671–739 are required for interaction with NUDT21; it reads CLALSGHDKT…KNSIKLRLNR (69 aa). A compositionally biased stretch (low complexity) spans 688 to 700; sequence TETSTTQSETIQT. Lys730 is modified (N6-acetyllysine; alternate). Residue Lys730 forms a Glycyl lysine isopeptide (Lys-Gly) (interchain with G-Cter in SUMO); alternate linkage. Ser732 bears the Phosphoserine mark. Lys734 carries the N6-acetyllysine; alternate modification. Lys734 is covalently cross-linked (Glycyl lysine isopeptide (Lys-Gly) (interchain with G-Cter in SUMO); alternate).

Belongs to the poly(A) polymerase family. In terms of assembly, monomer. Found in a complex with CPSF1, FIP1L1 and PAPOLA. Interacts with AHCYL1 and FIP1L1; the interaction with AHCYL1 seems to increase interaction with FIP1L1. Interacts with NUDT21; the interaction is diminished by acetylation. Interacts with KPNB1; the interaction promotes PAP nuclear import and is inhibited by acetylation of PAP. The cofactor is Mg(2+). Requires Mn(2+) as cofactor. Polysumoylated. Varying sumoylation depending on tissue- and cell-type. Highly sumoylated in bladder and NIH 3T3 cells. Sumoylation is required for nuclear localization and enhances PAP stability. Desumoylated by SENP1. Inhibits polymerase activity. In terms of processing, hyperphosphorylation on multiple CDK2 consensus and non-consensus sites in the C-terminal Ser/Thr-rich region represses PAP activity in late M-phase. Phosphorylation/dephosphorylation may regulate the interaction between PAP and CPSF. Post-translationally, acetylated in the C-terminus. Acetylation decreases interaction with NUDT21 and KPNB1, and inhibits nuclear localization through inhibiting binding to the importin alpha/beta complex.

The protein resides in the nucleus. It catalyses the reaction RNA(n) + ATP = RNA(n)-3'-adenine ribonucleotide + diphosphate. Its function is as follows. Polymerase that creates the 3'-poly(A) tail of mRNA's. Also required for the endoribonucleolytic cleavage reaction at some polyadenylation sites. May acquire specificity through interaction with a cleavage and polyadenylation specificity factor (CPSF) at its C-terminus. The protein is Poly(A) polymerase alpha (PAPOLA) of Bos taurus (Bovine).